Consider the following 228-residue polypeptide: Cytochrome c oxidase subunit 2 (228 aa).

Residues 1–14 (MPHASQLSLQEAMG) lie on the Mitochondrial intermembrane side of the membrane. Residues 15 to 45 (PTMEEVIFLHDHVLLLTCLMTMVITMFTLTA) traverse the membrane as a helical segment. Topologically, residues 46–59 (TTTALTHNDPTEEV) are mitochondrial matrix. Residues 60-87 (EQLEAAWTVAPIMILILTALPSVRSLYL) traverse the membrane as a helical segment. Residues 88–228 (MEEVFNPYLT…HFEQWLISEQ (141 aa)) lie on the Mitochondrial intermembrane side of the membrane. Cu cation contacts are provided by His-162, Cys-197, Glu-199, Cys-201, His-205, and Met-208. Position 199 (Glu-199) interacts with Mg(2+).

This sequence belongs to the cytochrome c oxidase subunit 2 family. In terms of assembly, component of the cytochrome c oxidase (complex IV, CIV), a multisubunit enzyme composed of 14 subunits. The complex is composed of a catalytic core of 3 subunits MT-CO1, MT-CO2 and MT-CO3, encoded in the mitochondrial DNA, and 11 supernumerary subunits COX4I, COX5A, COX5B, COX6A, COX6B, COX6C, COX7A, COX7B, COX7C, COX8 and NDUFA4, which are encoded in the nuclear genome. The complex exists as a monomer or a dimer and forms supercomplexes (SCs) in the inner mitochondrial membrane with NADH-ubiquinone oxidoreductase (complex I, CI) and ubiquinol-cytochrome c oxidoreductase (cytochrome b-c1 complex, complex III, CIII), resulting in different assemblies (supercomplex SCI(1)III(2)IV(1) and megacomplex MCI(2)III(2)IV(2)). Found in a complex with TMEM177, COA6, COX18, COX20, SCO1 and SCO2. Interacts with TMEM177 in a COX20-dependent manner. Interacts with COX20. Interacts with COX16. It depends on Cu cation as a cofactor.

Its subcellular location is the mitochondrion inner membrane. The enzyme catalyses 4 Fe(II)-[cytochrome c] + O2 + 8 H(+)(in) = 4 Fe(III)-[cytochrome c] + 2 H2O + 4 H(+)(out). Component of the cytochrome c oxidase, the last enzyme in the mitochondrial electron transport chain which drives oxidative phosphorylation. The respiratory chain contains 3 multisubunit complexes succinate dehydrogenase (complex II, CII), ubiquinol-cytochrome c oxidoreductase (cytochrome b-c1 complex, complex III, CIII) and cytochrome c oxidase (complex IV, CIV), that cooperate to transfer electrons derived from NADH and succinate to molecular oxygen, creating an electrochemical gradient over the inner membrane that drives transmembrane transport and the ATP synthase. Cytochrome c oxidase is the component of the respiratory chain that catalyzes the reduction of oxygen to water. Electrons originating from reduced cytochrome c in the intermembrane space (IMS) are transferred via the dinuclear copper A center (CU(A)) of subunit 2 and heme A of subunit 1 to the active site in subunit 1, a binuclear center (BNC) formed by heme A3 and copper B (CU(B)). The BNC reduces molecular oxygen to 2 water molecules using 4 electrons from cytochrome c in the IMS and 4 protons from the mitochondrial matrix. In Lycodon semicarinatus (Ryukyu odd-tooth snake), this protein is Cytochrome c oxidase subunit 2 (MT-CO2).